The sequence spans 245 residues: 5'-nucleotidase SurE (245 aa).

A divalent metal cation contacts are provided by aspartate 8, aspartate 9, serine 39, and asparagine 91.

It belongs to the SurE nucleotidase family. A divalent metal cation is required as a cofactor.

Its subcellular location is the cytoplasm. It carries out the reaction a ribonucleoside 5'-phosphate + H2O = a ribonucleoside + phosphate. Functionally, nucleotidase that shows phosphatase activity on nucleoside 5'-monophosphates. In Psychromonas ingrahamii (strain DSM 17664 / CCUG 51855 / 37), this protein is 5'-nucleotidase SurE.